Consider the following 938-residue polypeptide: Kexin (938 aa).

The first 20 residues, 1–20 (MLPIKLLIFILGYLLSPTLQ), serve as a signal peptide directing secretion. N41 and N193 each carry an N-linked (GlcNAc...) asparagine glycan. A Peptidase S8 domain is found at 179–489 (QWHLINLKYP…YGKTDAYKMV (311 aa)). Residues D213 and H251 each act as charge relay system in the active site. Disulfide bonds link C267–C414 and C359–C389. The Charge relay system role is filled by S422. N441, N512, N539, and N599 each carry an N-linked (GlcNAc...) asparagine glycan. Positions 498–647 (VKPQAWYYSD…QFRIFGESID (150 aa)) constitute a P/Homo B domain. Residues 671 to 768 (EKQNSKSTTT…DNDNDNGNKK (98 aa)) are disordered. Positions 677–691 (STTTTSSTTTATTTS) are enriched in low complexity. The span at 711-735 (KVDNSASITTSQTASLTSSNEQHQP) shows a compositional bias: polar residues. Residues 740–762 (SDSDSDTDDENKQEGEEDNDNDN) show a composition bias toward acidic residues. Residues 775-795 (GFYLMSIAVVGFIAVLLVMKF) traverse the membrane as a helical segment. At 796 to 924 (HKTPGSGRRR…SGTSTKKYKD (129 aa)) the chain is on the cytoplasmic side. Residues 798–808 (TPGSGRRRRRR) show a composition bias toward basic residues. The interval 798 to 938 (TPGSGRRRRR…EDHKDVVGTQ (141 aa)) is disordered. A compositionally biased stretch (acidic residues) spans 820-831 (DYSDSDDDEDDF). Residues 832–849 (DTRRADDDSFDLGHRNDQ) show a composition bias toward basic and acidic residues. The span at 850–859 (RVVSASQQQR) shows a compositional bias: low complexity. Residues 860–874 (QYDRQQDETRDRLFD) show a composition bias toward basic and acidic residues. A compositionally biased stretch (polar residues) spans 902 to 919 (QQSAKAPSNSEGNSGTST). A compositionally biased stretch (basic and acidic residues) spans 921-938 (KYKDNEADEDHKDVVGTQ).

This sequence belongs to the peptidase S8 family. Furin subfamily. Ca(2+) is required as a cofactor. In terms of processing, O-glycosylated.

It localises to the golgi apparatus. Its subcellular location is the trans-Golgi network membrane. It catalyses the reaction Cleavage of -Lys-Arg-|-Xaa- and -Arg-Arg-|-Xaa- bonds to process yeast alpha-factor pheromone and killer toxin precursors.. The chain is Kexin (KEX2) from Candida albicans (strain WO-1) (Yeast).